Consider the following 74-residue polypeptide: ATP synthase subunit c (74 aa).

Helical transmembrane passes span 8–28 and 52–72; these read FIGIGFMAIGMYGAALGVSNI and IGAGLAEAMGLFAFVIAMLLI.

Belongs to the ATPase C chain family. F-type ATPases have 2 components, F(1) - the catalytic core - and F(0) - the membrane proton channel. F(1) has five subunits: alpha(3), beta(3), gamma(1), delta(1), epsilon(1). F(0) has three main subunits: a(1), b(2) and c(10-14). The alpha and beta chains form an alternating ring which encloses part of the gamma chain. F(1) is attached to F(0) by a central stalk formed by the gamma and epsilon chains, while a peripheral stalk is formed by the delta and b chains.

It localises to the cell inner membrane. In terms of biological role, f(1)F(0) ATP synthase produces ATP from ADP in the presence of a proton or sodium gradient. F-type ATPases consist of two structural domains, F(1) containing the extramembraneous catalytic core and F(0) containing the membrane proton channel, linked together by a central stalk and a peripheral stalk. During catalysis, ATP synthesis in the catalytic domain of F(1) is coupled via a rotary mechanism of the central stalk subunits to proton translocation. Its function is as follows. Key component of the F(0) channel; it plays a direct role in translocation across the membrane. A homomeric c-ring of between 10-14 subunits forms the central stalk rotor element with the F(1) delta and epsilon subunits. The protein is ATP synthase subunit c of Rickettsia typhi (strain ATCC VR-144 / Wilmington).